The sequence spans 297 residues: Tyrosine recombinase XerD (297 aa).

A Core-binding (CB) domain is found at 1 to 86 (MNDLIEDFLH…SLRSFFHYLM (86 aa)). The Tyr recombinase domain maps to 107 to 291 (GLPKVLNLDD…TKLRLKDVYK (185 aa)). Residues Arg147, Lys171, His243, Arg246, and His269 contribute to the active site. The active-site O-(3'-phospho-DNA)-tyrosine intermediate is the Tyr278.

The protein belongs to the 'phage' integrase family. XerD subfamily. As to quaternary structure, forms a cyclic heterotetrameric complex composed of two molecules of XerC and two molecules of XerD.

Its subcellular location is the cytoplasm. Functionally, site-specific tyrosine recombinase, which acts by catalyzing the cutting and rejoining of the recombining DNA molecules. The XerC-XerD complex is essential to convert dimers of the bacterial chromosome into monomers to permit their segregation at cell division. It also contributes to the segregational stability of plasmids. The sequence is that of Tyrosine recombinase XerD from Listeria monocytogenes serotype 4b (strain F2365).